The following is a 94-amino-acid chain: MSDESGRRNLRMPNDDEVFAVVKRHDGGNHVTLQCEDGKERMGRIPGRMKYRTWINEGDVVLAEPWDWQDEKANVEWRYSDQDADQLREEGHIE.

Residues 6-80 (GRRNLRMPND…EKANVEWRYS (75 aa)) enclose the S1-like domain.

It belongs to the eIF-1A family.

In terms of biological role, seems to be required for maximal rate of protein biosynthesis. Enhances ribosome dissociation into subunits and stabilizes the binding of the initiator Met-tRNA(I) to 40 S ribosomal subunits. This Halobacterium salinarum (strain ATCC 700922 / JCM 11081 / NRC-1) (Halobacterium halobium) protein is Translation initiation factor 1A 2 (eIF1A2).